Consider the following 540-residue polypeptide: Ubiquitin carboxyl-terminal hydrolase 17-like protein E (540 aa).

The interval 1-22 (MVVSLSFPEETGGENLPSAPLE) is disordered. Residues 85 to 382 (CGLQNTGNSC…NAYVLFYVQQ (298 aa)) enclose the USP domain. Catalysis depends on Cys-94, which acts as the Nucleophile. Catalysis depends on His-341, which acts as the Proton acceptor. Basic and acidic residues-rich tracts occupy residues 431-441 (NREKRAKKETS) and 508-520 (APDK…HNGD). Disordered regions lie at residues 431-461 (NREK…QKHG) and 499-540 (RSTA…QGGR). The span at 523–540 (LTSQGLMSPGQLCSQGGR) shows a compositional bias: polar residues.

The protein belongs to the peptidase C19 family. USP17 subfamily. Interacts with SUDS3; the interaction is direct.

It localises to the nucleus. The protein resides in the endoplasmic reticulum. It catalyses the reaction Thiol-dependent hydrolysis of ester, thioester, amide, peptide and isopeptide bonds formed by the C-terminal Gly of ubiquitin (a 76-residue protein attached to proteins as an intracellular targeting signal).. Its function is as follows. Deubiquitinating enzyme that removes conjugated ubiquitin from specific proteins to regulate different cellular processes that may include cell proliferation, progression through the cell cycle, apoptosis, cell migration, and the cellular response to viral infection. The polypeptide is Ubiquitin carboxyl-terminal hydrolase 17-like protein E (Usp17le) (Mus musculus (Mouse)).